Here is a 532-residue protein sequence, read N- to C-terminus: Calnexin homolog 2 (532 aa).

The N-terminal stretch at 1–25 is a signal peptide; the sequence is MRERIITFVSLLLVALLSFPSVSYC. Residues 26-468 lie on the Lumenal side of the membrane; that stretch reads DDQTILYESF…EKAETQPNLT (443 aa). The Ca(2+) site is built by S34 and D65. Residues C110 and C145 are joined by a disulfide bond. Residues Y114, K116, Y136, and D143 each coordinate an alpha-D-glucoside. The tract at residues 208–302 is disordered; sequence NLLSAEDFEP…DEEDGEWEAP (95 aa). The p domain (Extended arm) stretch occupies residues 225 to 358; sequence IPDPEDKKPE…RDIPNPDYFE (134 aa). Residues 226-242 are compositionally biased toward basic and acidic residues; it reads PDPEDKKPEDWDERAKI. 5 tandem repeats follow at residues 227 to 238, 244 to 255, 263 to 274, 282 to 293, and 297 to 307. 4 X approximate repeats stretches follow at residues 227 to 293 and 297 to 354; these read DPED…DWDD and GEWE…IPNP. Composition is skewed to acidic residues over residues 252 to 283 and 290 to 299; these read DWDEDAPMEIEDEEAEKPEGWLDDEPVEVEDP and DWDDEEDGEW. A disulfide bond links C309 and C315. Tandem repeats lie at residues 316 to 326, 330 to 340, and 344 to 354. E373 serves as a coordination point for an alpha-D-glucoside. D384 provides a ligand contact to Ca(2+). An N-linked (GlcNAc...) asparagine glycan is attached at N466. Residues 469-489 traverse the membrane as a helical segment; it reads IGVLISIVIVFLSLFFKLIFG. At 490 to 532 the chain is on the cytoplasmic side; it reads GAKAKVEKKKPETAAETSTSEAKTEEKAEAVAAPRKRQTRRES. The disordered stretch occupies residues 493–532; sequence AKVEKKKPETAAETSTSEAKTEEKAEAVAAPRKRQTRRES. Over residues 523 to 532 the composition is skewed to basic residues; it reads PRKRQTRRES.

It belongs to the calreticulin family.

Its subcellular location is the endoplasmic reticulum membrane. In terms of biological role, calcium-binding protein that interacts with newly synthesized monoglucosylated glycoproteins in the endoplasmic reticulum. It may act in assisting protein assembly and/or in the retention within the ER of unassembled protein subunits. It seems to play a major role in the quality control apparatus of the ER by the retention of incorrectly folded proteins. This is Calnexin homolog 2 from Arabidopsis thaliana (Mouse-ear cress).